Consider the following 89-residue polypeptide: Small ribosomal subunit protein uS15 (89 aa).

Residues 1–10 show a composition bias toward basic and acidic residues; it reads MPLNTEKKQE. Positions 1–22 are disordered; it reads MPLNTEKKQELINSHQTHATDT. Residues 11–22 are compositionally biased toward polar residues; it reads LINSHQTHATDT.

This sequence belongs to the universal ribosomal protein uS15 family. In terms of assembly, part of the 30S ribosomal subunit. Forms a bridge to the 50S subunit in the 70S ribosome, contacting the 23S rRNA.

One of the primary rRNA binding proteins, it binds directly to 16S rRNA where it helps nucleate assembly of the platform of the 30S subunit by binding and bridging several RNA helices of the 16S rRNA. Functionally, forms an intersubunit bridge (bridge B4) with the 23S rRNA of the 50S subunit in the ribosome. This chain is Small ribosomal subunit protein uS15, found in Synechococcus sp. (strain RCC307).